The primary structure comprises 207 residues: Imidazoleglycerol-phosphate dehydratase (207 aa).

The protein belongs to the imidazoleglycerol-phosphate dehydratase family.

It is found in the cytoplasm. It catalyses the reaction D-erythro-1-(imidazol-4-yl)glycerol 3-phosphate = 3-(imidazol-4-yl)-2-oxopropyl phosphate + H2O. Its pathway is amino-acid biosynthesis; L-histidine biosynthesis; L-histidine from 5-phospho-alpha-D-ribose 1-diphosphate: step 6/9. This chain is Imidazoleglycerol-phosphate dehydratase (hisB), found in Azospirillum brasilense.